The primary structure comprises 439 residues: Branched-chain amino acid permease BrnQ (439 aa).

Over 1 to 9 (MTHQLRSRD) the chain is Cytoplasmic. The helical transmembrane segment at 10–30 (IIALGFMTFALFVGAGNIIFP) threads the bilayer. Residues 31–45 (PMVGLQAGEHVWTAA) are Periplasmic-facing. A helical transmembrane segment spans residues 46 to 66 (FGFLITAVGLPVLTVVALAKV). Over 67-79 (GGGVDSLSTPIGK) the chain is Cytoplasmic. A helical transmembrane segment spans residues 80 to 100 (VAGVLLATVCYLAVGPLFATP). Topologically, residues 101-118 (RTATVSFEVGIAPLTGDS) are periplasmic. The chain crosses the membrane as a helical span at residues 119–139 (ALPLFIYSLVYFAIVILVSLY). Topologically, residues 140 to 149 (PGKLLDTVGN) are cytoplasmic. Residues 150–170 (FLAPLKIIALVILSVAAIVWP) form a helical membrane-spanning segment. The Periplasmic segment spans residues 171–189 (AGSISTATEAYQNAAFSNG). Residues 190-210 (FVNGYLTMDTLGAMVFGIVIV) form a helical membrane-spanning segment. Over 211–226 (NAARSRGVTEARLLTR) the chain is Cytoplasmic. Residues 227 to 247 (YTVWAGLMAGVGLTLLYLALF) form a helical membrane-spanning segment. The Periplasmic segment spans residues 248 to 277 (RLGSDSASLVDQSANGAAILHAYVQHTFGG). Residues 278-298 (GGSFLLAALIFIACLVTAVGL) traverse the membrane as a helical segment. The Cytoplasmic portion of the chain corresponds to 299 to 316 (TCACAEFFAQYVPLSYRT). A helical membrane pass occupies residues 317–337 (LVFILGGFSMVVSNLGLSQLI). A topological domain (periplasmic) is located at residue Q338. Residues 339-359 (ISVPVLTAIYPPCIALVVLSF) form a helical membrane-spanning segment. Over 360–369 (TRSWWHNSSR) the chain is Cytoplasmic. The helical transmembrane segment at 370–390 (VIAPPMFISLLFGILDGIKAS) threads the bilayer. Over 391–404 (AFSDILPSWAQRLP) the chain is Periplasmic. The helical transmembrane segment at 405–425 (LAEQGLAWLMPTVVMVVLAII) threads the bilayer. Residues 426-439 (WDRAAGRQVTSSAH) lie on the Cytoplasmic side of the membrane.

Belongs to the branched chain amino acid transporter family.

Its subcellular location is the cell inner membrane. Its function is as follows. Liv-II branched chain amino acid transport system, which transports leucine, valine and isoleucine. This is Branched-chain amino acid permease BrnQ (brnQ) from Escherichia coli O157:H7.